A 449-amino-acid chain; its full sequence is Kynurenine 3-monooxygenase (449 aa).

This sequence belongs to the aromatic-ring hydroxylase family. KMO subfamily. It depends on FAD as a cofactor.

It catalyses the reaction L-kynurenine + NADPH + O2 + H(+) = 3-hydroxy-L-kynurenine + NADP(+) + H2O. It functions in the pathway cofactor biosynthesis; NAD(+) biosynthesis; quinolinate from L-kynurenine: step 1/3. Functionally, catalyzes the hydroxylation of L-kynurenine (L-Kyn) to form 3-hydroxy-L-kynurenine (L-3OHKyn). Required for synthesis of quinolinic acid. This Legionella pneumophila (strain Lens) protein is Kynurenine 3-monooxygenase.